A 254-amino-acid chain; its full sequence is Distal membrane-arm assembly complex protein 2 (254 aa).

Phosphoserine is present on S250.

Belongs to the ATP synthase subunit s family. Interacts with incompletely assembled mitochondrial NADH:ubiquinone oxidoreductase complex (complex I).

It is found in the mitochondrion. Functionally, required for the assembly of the mitochondrial NADH:ubiquinone oxidoreductase complex (complex I). Involved in the assembly of the distal region of complex I. The protein is Distal membrane-arm assembly complex protein 2 of Rattus norvegicus (Rat).